Reading from the N-terminus, the 316-residue chain is Apolipoprotein E (316 aa).

An N-terminal signal peptide occupies residues 1 to 18 (MKVLWVALVITLLAGCQA). Tandem repeats lie at residues 79–100 (VLMD…GQLG), 101–122 (PIAQ…ARLA), 123–144 (SDME…AMMG), 145–166 (QTTD…KRLL), 167–188 (RDAE…EGSE), 189–210 (RSVS…VRAA), 211–232 (TVGT…QKLR), and 233–254 (GRME…EQLE). The 8 X 22 AA approximate tandem repeats stretch occupies residues 79 to 254 (VLMDETMKEV…HLEEMREQLE (176 aa)). Residue Met-142 is modified to Methionine sulfoxide. Residues 157 to 167 (HLRKLRKRLLR) are LDL and other lipoprotein receptors binding. Heparin is bound at residue 161–164 (LRKR). The lipid-binding and lipoprotein association stretch occupies residues 209–289 (AATVGTLASQ…SWFEPLVEDM (81 aa)). Residue 228–235 (HQKLRGRM) participates in heparin binding. The interval 265-316 (SQMRLQAEAFQARLKSWFEPLVEDMQRQWAGLVEKVQLAMATSPTSAPIENS) is homooligomerization. A specificity for association with VLDL region spans residues 277–289 (RLKSWFEPLVEDM).

It belongs to the apolipoprotein A1/A4/E family. In terms of assembly, homotetramer. May interact with ABCA1; functionally associated with ABCA1 in the biogenesis of HDLs. May interact with APP/A4 amyloid-beta peptide; the interaction is extremely stable in vitro but its physiological significance is unclear. May interact with MAPT. May interact with MAP2. In the cerebrospinal fluid, interacts with secreted SORL1. Interacts with PMEL; this allows the loading of PMEL luminal fragment on ILVs to induce fibril nucleation. In terms of processing, APOE exists as multiple glycosylated and sialylated glycoforms within cells and in plasma. The extent of glycosylation and sialylation are tissue and context specific. Glycated in plasma VLDL. Post-translationally, phosphorylated by FAM20C in the extracellular medium.

The protein localises to the secreted. The protein resides in the extracellular space. It is found in the extracellular matrix. It localises to the extracellular vesicle. Its subcellular location is the endosome. The protein localises to the multivesicular body. APOE is an apolipoprotein, a protein associating with lipid particles, that mainly functions in lipoprotein-mediated lipid transport between organs via the plasma and interstitial fluids. APOE is a core component of plasma lipoproteins and is involved in their production, conversion and clearance. Apolipoproteins are amphipathic molecules that interact both with lipids of the lipoprotein particle core and the aqueous environment of the plasma. As such, APOE associates with chylomicrons, chylomicron remnants, very low density lipoproteins (VLDL) and intermediate density lipoproteins (IDL) but shows a preferential binding to high-density lipoproteins (HDL). It also binds a wide range of cellular receptors including the LDL receptor/LDLR and the very low-density lipoprotein receptor/VLDLR that mediate the cellular uptake of the APOE-containing lipoprotein particles. Finally, APOE also has a heparin-binding activity and binds heparan-sulfate proteoglycans on the surface of cells, a property that supports the capture and the receptor-mediated uptake of APOE-containing lipoproteins by cells. The polypeptide is Apolipoprotein E (APOE) (Orcinus orca (Killer whale)).